Consider the following 114-residue polypeptide: Iron-sulfur cluster insertion protein ErpA (114 aa).

Cysteine 42, cysteine 106, and cysteine 108 together coordinate iron-sulfur cluster.

Belongs to the HesB/IscA family. In terms of assembly, homodimer. The cofactor is iron-sulfur cluster.

Functionally, required for insertion of 4Fe-4S clusters for at least IspG. This chain is Iron-sulfur cluster insertion protein ErpA, found in Shigella boydii serotype 18 (strain CDC 3083-94 / BS512).